The chain runs to 809 residues: TLR4 interactor with leucine rich repeats (809 aa).

Positions methionine 1 to serine 25 are cleaved as a signal peptide. The LRRNT domain maps to valine 26 to serine 57. Over valine 26–glutamine 694 the chain is Extracellular. 12 LRR repeats span residues valine 61 to arginine 81, glutamine 84 to lysine 105, arginine 108 to proline 129, lysine 132 to glycine 153, serine 156 to proline 177, asparagine 180 to glutamine 201, lysine 204 to alanine 223, serine 230 to histidine 251, arginine 254 to glycine 275, alanine 278 to glutamate 298, serine 302 to histidine 323, and arginine 326 to alanine 347. The N-linked (GlcNAc...) asparagine glycan is linked to asparagine 73. In terms of domain architecture, LRRCT spans asparagine 359 to aspartate 416. An N-linked (GlcNAc...) asparagine glycan is attached at asparagine 411. Disordered regions lie at residues glycine 412–leucine 462 and arginine 483–glutamine 563. The span at proline 421–glutamate 436 shows a compositional bias: polar residues. Positions glycine 488–serine 506 are enriched in low complexity. The span at alanine 521–aspartate 543 shows a compositional bias: polar residues. Residues alanine 554–glutamine 563 are compositionally biased toward low complexity. Asparagine 587 carries N-linked (GlcNAc...) asparagine glycosylation. Residues leucine 695–tryptophan 715 form a helical membrane-spanning segment. Residues glycine 716 to aspartate 809 lie on the Cytoplasmic side of the membrane. Serine 796 carries the phosphoserine modification.

As to quaternary structure, belongs to the lipopolysaccharide (LPS) receptor, a multi-protein complex containing at least CD14, MD-2 and TLR4. Interacts with TLR4; this interaction is greatly enhanced by LPS stimulation. Interacts with LPS. N-glycolysaled. In terms of tissue distribution, highly expressed in brain, spinal cord and lung.

It is found in the membrane. Component of the TLR4 signaling complex. Mediates the innate immune response to bacterial lipopolysaccharide (LPS) leading to cytokine secretion. This Mus musculus (Mouse) protein is TLR4 interactor with leucine rich repeats (Tril).